The following is a 447-amino-acid chain: GTPase Der (447 aa).

EngA-type G domains are found at residues 3–167 (PVIA…VQER) and 181–354 (VKIA…AAAM). Residues 9–16 (GRPNVGKS), 56–60 (DTGGF), 119–122 (NKAE), 187–194 (GRPNVGKS), 234–238 (DTAGL), and 299–302 (NKWD) contribute to the GTP site. A KH-like domain is found at 355–439 (VKLPTPQLTR…PLRIEFRTNK (85 aa)).

This sequence belongs to the TRAFAC class TrmE-Era-EngA-EngB-Septin-like GTPase superfamily. EngA (Der) GTPase family. Associates with the 50S ribosomal subunit.

GTPase that plays an essential role in the late steps of ribosome biogenesis. The polypeptide is GTPase Der (Cupriavidus pinatubonensis (strain JMP 134 / LMG 1197) (Cupriavidus necator (strain JMP 134))).